We begin with the raw amino-acid sequence, 408 residues long: Aminomethyltransferase, mitochondrial (408 aa).

The N-terminal 30 residues, 1–30 (MRGGGLWQLGQSVTRRLAQAEKKVIARRCF), are a transit peptide targeting the mitochondrion. E235, R266, and Y404 together coordinate substrate.

Belongs to the GcvT family. In terms of assembly, the glycine cleavage system is composed of four proteins: P, T, L and H.

It localises to the mitochondrion. It catalyses the reaction N(6)-[(R)-S(8)-aminomethyldihydrolipoyl]-L-lysyl-[protein] + (6S)-5,6,7,8-tetrahydrofolate = N(6)-[(R)-dihydrolipoyl]-L-lysyl-[protein] + (6R)-5,10-methylene-5,6,7,8-tetrahydrofolate + NH4(+). Its function is as follows. The glycine cleavage system catalyzes the degradation of glycine. This is Aminomethyltransferase, mitochondrial (GDCST) from Mesembryanthemum crystallinum (Common ice plant).